The following is a 352-amino-acid chain: tRNA pseudouridine synthase D (352 aa).

Asp-81 functions as the Nucleophile in the catalytic mechanism. The TRUD domain maps to 157 to 303 (GVPNYFGTQR…MDHERRILRL (147 aa)).

The protein belongs to the pseudouridine synthase TruD family.

It carries out the reaction uridine(13) in tRNA = pseudouridine(13) in tRNA. Responsible for synthesis of pseudouridine from uracil-13 in transfer RNAs. In Pseudomonas putida (strain ATCC 47054 / DSM 6125 / CFBP 8728 / NCIMB 11950 / KT2440), this protein is tRNA pseudouridine synthase D.